The sequence spans 335 residues: Probable calcium-binding protein CML49 (335 aa).

Residues 1–10 (MSGYPPSSQG) show a composition bias toward low complexity. Residues 1–154 (MSGYPPSSQG…PQASYGSPFA (154 aa)) form a disordered region. Pro residues predominate over residues 30–45 (NPPPYGSSGSNPPPPY). Residues 46-63 (GSSASSPYAVPYGAQPAP) show a composition bias toward low complexity. Residues 110–141 (DYGGYGGAPQQSGHGGGYGGAPQQSGHGGGYG) show a composition bias toward gly residues. 2 consecutive EF-hand domains span residues 164–199 (GTDP…YNQS) and 230–265 (FSLQ…LGFS). Ca(2+)-binding residues include aspartate 177, aspartate 179, serine 181, glutamate 188, aspartate 243, aspartate 245, serine 247, arginine 249, and glutamate 254.

In terms of biological role, potential calcium sensor. The chain is Probable calcium-binding protein CML49 (CML49) from Arabidopsis thaliana (Mouse-ear cress).